Reading from the N-terminus, the 77-residue chain is Protein UL148C (77 aa).

Helical transmembrane passes span valine 10 to valine 30 and isoleucine 35 to alanine 55.

It is found in the host membrane. This is Protein UL148C (UL148C) from Homo sapiens (Human).